Consider the following 1325-residue polypeptide: Nucleoporin nup146 (1325 aa).

Disordered stretches follow at residues Met1 to Ser20, Val453 to Asn474, Gly758 to His951, and Phe973 to Leu994. Residues Gln763–Leu778 show a composition bias toward polar residues. Residues Ser779 to Glu791 show a composition bias toward basic and acidic residues. Over residues Thr792–Lys801 the composition is skewed to polar residues. A compositionally biased stretch (basic and acidic residues) spans Gln802–Gly811. 2 stretches are compositionally biased toward polar residues: residues Ala816–Ser835 and Phe850–Phe861. Over residues Leu867–Asp881 the composition is skewed to basic and acidic residues. Position 899 is a phosphothreonine (Thr899). Residues Ser927–Ser937 show a composition bias toward acidic residues. Thr946 carries the phosphothreonine modification. Ser1041, Ser1043, and Ser1044 each carry phosphoserine.

Its subcellular location is the cytoplasm. The protein localises to the nucleus. In terms of biological role, functions as a component of the nuclear pore complex (NPC). NPC components, collectively referred to as nucleoporins (NUPs), can play the role of both NPC structural components and of docking or interaction partners for transiently associated nuclear transport factors. Active directional transport is assured by both, a Phe-Gly (FG) repeat affinity gradient for these transport factors across the NPC and a transport cofactor concentration gradient across the nuclear envelope. The sequence is that of Nucleoporin nup146 (nup146) from Schizosaccharomyces pombe (strain 972 / ATCC 24843) (Fission yeast).